Reading from the N-terminus, the 338-residue chain is Anthranilate phosphoribosyltransferase (338 aa).

5-phospho-alpha-D-ribose 1-diphosphate-binding positions include Gly-81, Gly-84–Asp-85, Thr-89, Asn-91–Thr-94, Lys-109–Ser-117, and Ala-121. Gly-81 contributes to the anthranilate binding site. A Mg(2+)-binding site is contributed by Ser-93. Residue Asn-112 coordinates anthranilate. Arg-167 lines the anthranilate pocket. Mg(2+) contacts are provided by Asp-226 and Glu-227.

This sequence belongs to the anthranilate phosphoribosyltransferase family. In terms of assembly, homodimer. It depends on Mg(2+) as a cofactor.

It carries out the reaction N-(5-phospho-beta-D-ribosyl)anthranilate + diphosphate = 5-phospho-alpha-D-ribose 1-diphosphate + anthranilate. The protein operates within amino-acid biosynthesis; L-tryptophan biosynthesis; L-tryptophan from chorismate: step 2/5. In terms of biological role, catalyzes the transfer of the phosphoribosyl group of 5-phosphorylribose-1-pyrophosphate (PRPP) to anthranilate to yield N-(5'-phosphoribosyl)-anthranilate (PRA). This is Anthranilate phosphoribosyltransferase from Cereibacter sphaeroides (strain ATCC 17023 / DSM 158 / JCM 6121 / CCUG 31486 / LMG 2827 / NBRC 12203 / NCIMB 8253 / ATH 2.4.1.) (Rhodobacter sphaeroides).